A 184-amino-acid chain; its full sequence is UPF0149 protein Pmen_0324 (184 aa).

Belongs to the UPF0149 family.

The polypeptide is UPF0149 protein Pmen_0324 (Ectopseudomonas mendocina (strain ymp) (Pseudomonas mendocina)).